The chain runs to 198 residues: Inner membrane-spanning protein YciB (198 aa).

Transmembrane regions (helical) follow at residues 36-56 (IFSATAMLIISSVVVYGILYI), 67-87 (LTLVACLVFGSLTLAFHSETF), 90-110 (WKAPVVNWLFAVAFAGSHFIG), 133-153 (LNIAWIIFFLFCGAANLYVAF), and 162-182 (FKVFGSLGMTLIFLVGQGIYL).

Belongs to the YciB family.

Its subcellular location is the cell inner membrane. In terms of biological role, plays a role in cell envelope biogenesis, maintenance of cell envelope integrity and membrane homeostasis. In Pseudomonas syringae pv. tomato (strain ATCC BAA-871 / DC3000), this protein is Inner membrane-spanning protein YciB.